A 603-amino-acid polypeptide reads, in one-letter code: MPNRAFKQSNIRNFSIIAHIDHGKSTLSDRLIQHCGGLTDREMAEQVLDSMDLERERGITIKAQSVTLYYTAKDGETYQLNFIDTPGHVDFSYEVSRSLAGCEGALLVVDAAQGVEAQTLANCYTAIEMDLEVVPVLNKIDLPQADAMGVAQEIEDIVGIEAVDAVQCSAKTGLGIDDVLERIVRQIPPPKGEPEEPLQALIIDSWFDNYQGVVSLVRVRNGTLRAGEKMTVMSTGQSYQIDKVGYFDPKPHETGILHTGEVGYVISGIKDILGAPVGDTLTNTKSPAKEPVPGFKKVKPQVYAGMFPISSEDYESFRDALGKLSLNDASLFYEPENSAALGFGFRCGFLGMLHMEIIQERLEREYDIDLITTAPTVVYEVEKTDGSIVKVDNPVNLPAVNDIETIYEPIVEANILVPQEFLGNVITLCVDKRGVQTAMAYHGKQVAVTYELPMAEVVMDFFDRLKSTSRGYASLDYQFKKFEPADMVRVDILINGDRVDALAMITHRDHAEGRGRMLVDKMRELIPRQMFDIAIQATIGNHVIARSTVKQLRKNVTAKCYGGDISRKKKLLQKQKEGKKRMKNLGNVEVPQEAFLAVLKVGK.

Residues 9 to 191 (SNIRNFSIIA…RIVRQIPPPK (183 aa)) enclose the tr-type G domain. Residues 21–26 (DHGKST) and 138–141 (NKID) each bind GTP.

It belongs to the TRAFAC class translation factor GTPase superfamily. Classic translation factor GTPase family. LepA subfamily.

It is found in the cell inner membrane. The catalysed reaction is GTP + H2O = GDP + phosphate + H(+). Required for accurate and efficient protein synthesis under certain stress conditions. May act as a fidelity factor of the translation reaction, by catalyzing a one-codon backward translocation of tRNAs on improperly translocated ribosomes. Back-translocation proceeds from a post-translocation (POST) complex to a pre-translocation (PRE) complex, thus giving elongation factor G a second chance to translocate the tRNAs correctly. Binds to ribosomes in a GTP-dependent manner. In Idiomarina loihiensis (strain ATCC BAA-735 / DSM 15497 / L2-TR), this protein is Elongation factor 4.